Consider the following 148-residue polypeptide: UPF0134 protein MPN_410 (148 aa).

Belongs to the UPF0134 family.

The chain is UPF0134 protein MPN_410 from Mycoplasma pneumoniae (strain ATCC 29342 / M129 / Subtype 1) (Mycoplasmoides pneumoniae).